The sequence spans 402 residues: Multidrug resistance protein MdtH (402 aa).

Residues 1-12 (MSRVSQARNLGK) lie on the Cytoplasmic side of the membrane. Residues 13–33 (YFLLIDNMLVVLGFFVVFPLI) form a helical membrane-spanning segment. Over 34–98 (SIRFVDQMGW…GFATMGIAHE (65 aa)) the chain is Periplasmic. Residues 99–116 (PWLLWFSCLLSGLGGTLF) traverse the membrane as a helical segment. At 117–138 (DPPRSALVVKLIRPQQRGRFFS) the chain is on the cytoplasmic side. The chain crosses the membrane as a helical span at residues 139-159 (LLMMQDSAGAVIGALLGSWLL). The Periplasmic portion of the chain corresponds to 160 to 164 (QYDFR). The helical transmembrane segment at 165 to 185 (LVCATGAVLFVLCAAFNAWLL) threads the bilayer. The Cytoplasmic segment spans residues 186-213 (PAWKLSTVRTPVREGMTRVMRDKRFVTY). The helical transmembrane segment at 214-234 (VLTLAGYYMLAVQVMLMLPIM) threads the bilayer. At 235–243 (VNDVAGAPS) the chain is on the periplasmic side. The chain crosses the membrane as a helical span at residues 244–264 (AVKWMYAIEACLSLTLLYPIA). Topologically, residues 265-276 (RWSEKHFRLEHR) are cytoplasmic. The chain crosses the membrane as a helical span at residues 277–297 (LMAGLLIMSLSMMPVGMVSGL). Topologically, residues 298–299 (QQ) are periplasmic. Residues 300–320 (LFTLICLFYIGSIIAEPARET) traverse the membrane as a helical segment. At 321–339 (LSASLADARARGSYMGFSR) the chain is on the cytoplasmic side. Residues 340 to 360 (LGLAIGGAIGYIGGGWLFDLG) traverse the membrane as a helical segment. At 361-367 (KSVHQPE) the chain is on the periplasmic side. The chain crosses the membrane as a helical span at residues 368-388 (LPWMMLGIIGIFTFLALGWQF). The Cytoplasmic portion of the chain corresponds to 389–402 (SQKRAARRLLERDA).

The protein belongs to the major facilitator superfamily. DHA1 family. MdtH (TC 2.A.1.2.21) subfamily.

The protein resides in the cell inner membrane. In terms of biological role, confers resistance to norfloxacin and enoxacin. The polypeptide is Multidrug resistance protein MdtH (Escherichia coli O157:H7).